A 556-amino-acid chain; its full sequence is U-box domain-containing protein 38 (556 aa).

The segment at 1–34 (MGKNGRLRWNPFSHRSSSSTSSSSRQQQQEQQPP) is disordered. Positions 13-32 (SHRSSSSTSSSSRQQQQEQQ) are enriched in low complexity. One can recognise a U-box domain in the interval 32-108 (QPPVEFLCPI…DTWCDTVGVS (77 aa)). ARM repeat units lie at residues 256–295 (DEARVSLCSPRILSLLKNMIVSRYSLVQTNALASLVNLSL), 297–336 (KKNKLTIVRLGFVPILIDVLKSGSREAQEHAAGTIFSLSL), 338–378 (DDNK…HLTL), 380–417 (QTNRSKLVRLGAVPALFSMVRSGESASRALLVICNLAC), and 418–468 (CSEG…ALSH).

Binds to SD16, SD17, SD18 and SD129.

It catalyses the reaction S-ubiquitinyl-[E2 ubiquitin-conjugating enzyme]-L-cysteine + [acceptor protein]-L-lysine = [E2 ubiquitin-conjugating enzyme]-L-cysteine + N(6)-ubiquitinyl-[acceptor protein]-L-lysine.. Its pathway is protein modification; protein ubiquitination. In terms of biological role, functions as an E3 ubiquitin ligase. This chain is U-box domain-containing protein 38 (PUB38), found in Arabidopsis thaliana (Mouse-ear cress).